Here is a 483-residue protein sequence, read N- to C-terminus: Glycogen synthase (483 aa).

Lys15 contacts ADP-alpha-D-glucose.

Belongs to the glycosyltransferase 1 family. Bacterial/plant glycogen synthase subfamily.

The catalysed reaction is [(1-&gt;4)-alpha-D-glucosyl](n) + ADP-alpha-D-glucose = [(1-&gt;4)-alpha-D-glucosyl](n+1) + ADP + H(+). It functions in the pathway glycan biosynthesis; glycogen biosynthesis. In terms of biological role, synthesizes alpha-1,4-glucan chains using ADP-glucose. This chain is Glycogen synthase, found in Petrotoga mobilis (strain DSM 10674 / SJ95).